The chain runs to 293 residues: Small ribosomal subunit protein uS5 (293 aa).

The disordered stretch occupies residues 1-55 (MADDAGAAGGPGGPGGPGLGGRGGFRGGFGSGLRGRGRGRGRGRGRGRGARGGKA). A2 is modified (N-acetylalanine). Gly residues predominate over residues 7–34 (AAGGPGGPGGPGLGGRGGFRGGFGSGLR). 14 repeat units span residues 9–11 (GGP), 12–14 (GGP), 15–17 (GGP), 22–25 (RGGF), 26–29 (RGGF), 34–35 (RG), 36–37 (RG), 38–39 (RG), 40–41 (RG), 42–43 (RG), 44–45 (RG), 46–47 (RG), 48–49 (RG), and 51–52 (RG). The interval 9-17 (GGPGGPGGP) is 3 X 3 AA tandem repeats of G-G-P. The segment at 22-29 (RGGFRGGF) is 2 X 4 AA tandem repeats of R-G-G-F. Residues 34 to 52 (RGRGRGRGRGRGRGRGARG) form a 9 X 2 AA tandem repeats of R-G region. Over residues 35 to 51 (GRGRGRGRGRGRGRGAR) the composition is skewed to basic residues. Residues K54 and K58 each participate in a glycyl lysine isopeptide (Lys-Gly) (interchain with G-Cter in ubiquitin) cross-link. An S5 DRBM domain is found at 102–165 (LKDEVLKIMP…ILAKLSIVPV (64 aa)). At T252 the chain carries Phosphothreonine. The residue at position 263 (K263) is an N6-acetyllysine. Residue S264 is modified to Phosphoserine. At T270 the chain carries Phosphothreonine. Position 275 is an N6-acetyllysine; alternate (K275). Residue K275 forms a Glycyl lysine isopeptide (Lys-Gly) (interchain with G-Cter in SUMO1); alternate linkage. Residue K275 forms a Glycyl lysine isopeptide (Lys-Gly) (interchain with G-Cter in SUMO2); alternate linkage. A Glycyl lysine isopeptide (Lys-Gly) (interchain with G-Cter in ubiquitin); alternate cross-link involves residue K275. S281 is subject to Phosphoserine.

The protein belongs to the universal ribosomal protein uS5 family. As to quaternary structure, component of the small ribosomal subunit. Interacts with zinc finger protein ZNF277 (via zinc-finger domains); the interaction is direct; the interaction is extra-ribosomal. Interaction with ZNF277 competes with the binding of RPS2 to protein arginine methyltransferase PRMT3. Citrullinated by PADI4 in the Arg/Gly-rich region. Post-translationally, asymmetric arginine dimethylation by PRMT3 occurs at multiple sites in the Arg/Gly-rich region. In terms of processing, monoubiquitinated at Lys-54 and Lys-58 by RNF10 when a ribosome has stalled during translation, leading to its degradation by the proteasome. Deubiquitinated at Lys-54 and Lys-58 by USP10, preventing degradation by the proteasome and promoting 40S ribosome subunit recycling following ribosome dissociation.

It localises to the cytoplasm. Its subcellular location is the nucleus. The protein localises to the nucleolus. Component of the ribosome, a large ribonucleoprotein complex responsible for the synthesis of proteins in the cell. The small ribosomal subunit (SSU) binds messenger RNAs (mRNAs) and translates the encoded message by selecting cognate aminoacyl-transfer RNA (tRNA) molecules. The large subunit (LSU) contains the ribosomal catalytic site termed the peptidyl transferase center (PTC), which catalyzes the formation of peptide bonds, thereby polymerizing the amino acids delivered by tRNAs into a polypeptide chain. The nascent polypeptides leave the ribosome through a tunnel in the LSU and interact with protein factors that function in enzymatic processing, targeting, and the membrane insertion of nascent chains at the exit of the ribosomal tunnel. Plays a role in the assembly and function of the 40S ribosomal subunit. Mutations in this protein affects the control of translational fidelity. Involved in nucleolar processing of pre-18S ribosomal RNA and ribosome assembly. This chain is Small ribosomal subunit protein uS5 (Rps2), found in Rattus norvegicus (Rat).